We begin with the raw amino-acid sequence, 160 residues long: Cytochrome b6-f complex subunit 4 (160 aa).

3 helical membrane passes run 36 to 56, 95 to 115, and 131 to 151; these read LLYM…GLAV, LLGV…PFIE, and TVFL…CLPI.

Belongs to the cytochrome b family. PetD subfamily. As to quaternary structure, the 4 large subunits of the cytochrome b6-f complex are cytochrome b6, subunit IV (17 kDa polypeptide, petD), cytochrome f and the Rieske protein, while the 4 small subunits are petG, petL, petM and petN. The complex functions as a dimer.

The protein resides in the plastid. It is found in the chloroplast thylakoid membrane. Functionally, component of the cytochrome b6-f complex, which mediates electron transfer between photosystem II (PSII) and photosystem I (PSI), cyclic electron flow around PSI, and state transitions. The polypeptide is Cytochrome b6-f complex subunit 4 (Tupiella akineta (Green alga)).